A 220-amino-acid polypeptide reads, in one-letter code: tRNA (guanine-N(7)-)-methyltransferase (220 aa).

Glu-44, Glu-69, Asp-96, and Asp-118 together coordinate S-adenosyl-L-methionine. The active site involves Asp-118. Residue Lys-122 coordinates substrate. The tract at residues 124-129 (RHEKRR) is interaction with RNA. Residues Asp-154 and 191–194 (TEYE) contribute to the substrate site.

Belongs to the class I-like SAM-binding methyltransferase superfamily. TrmB family.

It catalyses the reaction guanosine(46) in tRNA + S-adenosyl-L-methionine = N(7)-methylguanosine(46) in tRNA + S-adenosyl-L-homocysteine. It functions in the pathway tRNA modification; N(7)-methylguanine-tRNA biosynthesis. Functionally, catalyzes the formation of N(7)-methylguanine at position 46 (m7G46) in tRNA. The polypeptide is tRNA (guanine-N(7)-)-methyltransferase (Halalkalibacterium halodurans (strain ATCC BAA-125 / DSM 18197 / FERM 7344 / JCM 9153 / C-125) (Bacillus halodurans)).